A 448-amino-acid chain; its full sequence is MKIYNTYSRQLEDFQPIEPGKVKMYVCGPTVYNYIHVGNARSVVAFDLVRKYLEFRGFEVEYISNFTDVDDKIIKAAVSENISTKELSERYIAAFYEDTDLLNVKRASQNPKATEFIEAMIDFIQELLDKDYAYISEGDVYFRVAKSKNYAKLANKNLADLLAGASGRTDEETNLKESPADFALWKSVKADEVSWQAPWGAGRPGWHIECSVMSTSLLGETIDIHGGGADLEFPHHTNEIAQSEAKTGQKFVNYWMHNGFVNVDGEKMSKSLGNFTTVHELLQVVDPQILRFFLATTHYRRPLNFTDDALTEAENNIKKIENAYRHLDDQAESNLSALTTFRNDFVAAMDEDFNIANGMTVFYDFVSWVNKGNGGAEVKAFFDQVLEILGIKFEIEQSLDSEIEAMIEARQLAREVRDFAKSDEIRDALKAQGIVLEDTKDGVRWHRE.

A Zn(2+)-binding site is contributed by C27. Positions 29–39 (PTVYNYIHVGN) match the 'HIGH' region motif. Zn(2+) is bound by residues C210, H235, and E239. The 'KMSKS' region signature appears at 267-271 (KMSKS). Residue K270 participates in ATP binding.

The protein belongs to the class-I aminoacyl-tRNA synthetase family. As to quaternary structure, monomer. Requires Zn(2+) as cofactor.

It localises to the cytoplasm. The enzyme catalyses tRNA(Cys) + L-cysteine + ATP = L-cysteinyl-tRNA(Cys) + AMP + diphosphate. This chain is Cysteine--tRNA ligase, found in Lactococcus lactis subsp. cremoris (strain SK11).